Here is a 580-residue protein sequence, read N- to C-terminus: Glutathione hydrolase proenzyme (580 aa).

The signal sequence occupies residues 1-25 (MIKPTFLRRVAIAALLSGSCFSAAA). R114 contacts L-glutamate. The Nucleophile role is filled by T391. L-glutamate contacts are provided by residues T409, N411, Q430, D433, 462–463 (SS), and 483–484 (GG). The disordered stretch occupies residues 561-580 (DGELYGASDPRSVDDLTAGY).

It belongs to the gamma-glutamyltransferase family. As to quaternary structure, this enzyme consists of two polypeptide chains, which are synthesized in precursor form from a single polypeptide. In terms of processing, cleaved by autocatalysis into a large and a small subunit.

It localises to the periplasm. It carries out the reaction an N-terminal (5-L-glutamyl)-[peptide] + an alpha-amino acid = 5-L-glutamyl amino acid + an N-terminal L-alpha-aminoacyl-[peptide]. It catalyses the reaction glutathione + H2O = L-cysteinylglycine + L-glutamate. The enzyme catalyses an S-substituted glutathione + H2O = an S-substituted L-cysteinylglycine + L-glutamate. It functions in the pathway sulfur metabolism; glutathione metabolism. Its activity is regulated as follows. Transferase and hydrolase activities are inhibited by L-Ala and L-Gln, and also by GGT affinity labeling reagents such as azaserine and 6-diazo-5-oxo-nor-leucine. Its function is as follows. Cleaves the gamma-glutamyl bond of periplasmic glutathione (gamma-Glu-Cys-Gly), glutathione conjugates, and other gamma-glutamyl compounds. The metabolism of glutathione releases free glutamate and the dipeptide cysteinyl-glycine, which is hydrolyzed to cysteine and glycine by dipeptidases; it may function in amino acid uptake/salvage, or possibly in peptidoglycan linkage. Catalyzes the hydrolysis and transpeptidation of many gamma-glutamyl compounds (including some D-gamma-glutamyl substrates), with a preference for basic and aromatic amino acids as acceptors. The KM values for gamma-glutamyl acceptors are so high that it has been proposed transpeptidation is not the physiological role in E.coli. The protein is Glutathione hydrolase proenzyme (ggt) of Escherichia coli (strain K12).